The primary structure comprises 183 residues: ATP synthase subunit delta (183 aa).

The protein belongs to the ATPase delta chain family. F-type ATPases have 2 components, F(1) - the catalytic core - and F(0) - the membrane proton channel. F(1) has five subunits: alpha(3), beta(3), gamma(1), delta(1), epsilon(1). F(0) has three main subunits: a(1), b(2) and c(10-14). The alpha and beta chains form an alternating ring which encloses part of the gamma chain. F(1) is attached to F(0) by a central stalk formed by the gamma and epsilon chains, while a peripheral stalk is formed by the delta and b chains.

Its subcellular location is the cell inner membrane. Its function is as follows. F(1)F(0) ATP synthase produces ATP from ADP in the presence of a proton or sodium gradient. F-type ATPases consist of two structural domains, F(1) containing the extramembraneous catalytic core and F(0) containing the membrane proton channel, linked together by a central stalk and a peripheral stalk. During catalysis, ATP synthesis in the catalytic domain of F(1) is coupled via a rotary mechanism of the central stalk subunits to proton translocation. This protein is part of the stalk that links CF(0) to CF(1). It either transmits conformational changes from CF(0) to CF(1) or is implicated in proton conduction. This chain is ATP synthase subunit delta, found in Solidesulfovibrio magneticus (strain ATCC 700980 / DSM 13731 / RS-1) (Desulfovibrio magneticus).